The chain runs to 212 residues: uncharacterized protein (212 aa).

This is an uncharacterized protein from Aquifex aeolicus (strain VF5).